The following is a 68-amino-acid chain: UPF0434 protein BMA10229_A1047 (68 aa).

Belongs to the UPF0434 family.

This Burkholderia mallei (strain NCTC 10229) protein is UPF0434 protein BMA10229_A1047.